We begin with the raw amino-acid sequence, 407 residues long: Probable tRNA pseudouridine synthase D (407 aa).

Catalysis depends on Asp81, which acts as the Nucleophile. The TRUD domain occupies 151 to 372 (GFPNYFGIQR…PGGRRELLIR (222 aa)).

Belongs to the pseudouridine synthase TruD family.

The enzyme catalyses uridine(13) in tRNA = pseudouridine(13) in tRNA. Could be responsible for synthesis of pseudouridine from uracil-13 in transfer RNAs. The sequence is that of Probable tRNA pseudouridine synthase D from Pyrococcus furiosus (strain ATCC 43587 / DSM 3638 / JCM 8422 / Vc1).